A 398-amino-acid polypeptide reads, in one-letter code: Acetate kinase 1 (398 aa).

A Mg(2+)-binding site is contributed by asparagine 9. Lysine 16 contributes to the ATP binding site. Arginine 89 is a substrate binding site. The Proton donor/acceptor role is filled by aspartate 146. ATP contacts are provided by residues 206 to 210, 281 to 283, and 329 to 333; these read HLGNG, DCR, and GIGEN. Residue glutamate 384 coordinates Mg(2+).

Belongs to the acetokinase family. As to quaternary structure, homodimer. The cofactor is Mg(2+). It depends on Mn(2+) as a cofactor.

It is found in the cytoplasm. The enzyme catalyses acetate + ATP = acetyl phosphate + ADP. It participates in metabolic intermediate biosynthesis; acetyl-CoA biosynthesis; acetyl-CoA from acetate: step 1/2. In terms of biological role, catalyzes the formation of acetyl phosphate from acetate and ATP. Can also catalyze the reverse reaction. The protein is Acetate kinase 1 of Vibrio cholerae serotype O1 (strain ATCC 39315 / El Tor Inaba N16961).